The chain runs to 316 residues: E3 ubiquitin-protein ligase rnf146 (316 aa).

The segment at 36-74 (CAICLQTCVHPVSLPCKHIFCYLCVKGASWLGRRCALCR) adopts an RING-type zinc-finger fold. A WWE domain is found at 91 to 167 (EELKSASRGN…EHGRRRKIKR (77 aa)). Residues Tyr-107, Arg-110, Trp-114, Tyr-144, Gln-153, Arg-163, and Lys-175 each coordinate a glycoprotein. The interval 257-316 (GRNNIGEGEEGQPLINARMPAPSALLEESEPSDSNDHGSPTLQHNSLLVPQSNRLPFGNP) is disordered. Positions 293-310 (HGSPTLQHNSLLVPQSNR) are enriched in polar residues.

The protein resides in the cytoplasm. It is found in the cytosol. The protein localises to the nucleus. The catalysed reaction is S-ubiquitinyl-[E2 ubiquitin-conjugating enzyme]-L-cysteine + [acceptor protein]-L-lysine = [E2 ubiquitin-conjugating enzyme]-L-cysteine + N(6)-ubiquitinyl-[acceptor protein]-L-lysine.. It functions in the pathway protein modification; protein ubiquitination. Functionally, E3 ubiquitin-protein ligase that specifically binds poly-ADP-ribosylated proteins and mediates their ubiquitination and subsequent degradation. May regulate many important biological processes, such as cell survival and DNA damage response. Acts as an activator of the Wnt signaling pathway by mediating the ubiquitination of poly-ADP-ribosylated proteins. Neuroprotective protein. Protects against cell death induced by DNA damaging agents and rescues cells from G1 arrest. Promotes cell survival after gamma-irradiation. Facilitates DNA repair. The chain is E3 ubiquitin-protein ligase rnf146 (rnf146) from Xenopus tropicalis (Western clawed frog).